The sequence spans 62 residues: Sucrase-isomaltase, intestinal (62 aa).

The Cytoplasmic segment spans residues 2-12; sequence ARKKFSGLEIX. Position 7 is a phosphoserine; by PKA (Ser7). Residues 13–32 traverse the membrane as a helical; Signal-anchor for type II membrane protein segment; the sequence is LIVLFAIVLSIAIALVVVXA. Topologically, residues 33–38 are lumenal; it reads SKXPAV. Tyr59 is subject to Sulfotyrosine.

The protein belongs to the glycosyl hydrolase 31 family. The resulting sucrase and isomaltase subunits stay associated with one another in a complex by non-covalent linkages. The precursor is proteolytically cleaved when exposed to pancreatic proteases in the intestinal lumen. Post-translationally, sulfated.

It is found in the apical cell membrane. It carries out the reaction Hydrolysis of sucrose and maltose by an alpha-D-glucosidase-type action.. The catalysed reaction is Hydrolysis of (1-&gt;6)-alpha-D-glucosidic linkages in some oligosaccharides produced from starch and glycogen by alpha-amylase, and in isomaltose.. Plays an important role in the final stage of carbohydrate digestion. Isomaltase activity is specific for both alpha-1,4- and alpha-1,6-oligosaccharides. The protein is Sucrase-isomaltase, intestinal (SI) of Sus scrofa (Pig).